Consider the following 916-residue polypeptide: Isoleucine--tRNA ligase (916 aa).

Positions 57-67 (PYANGNLHMGH) match the 'HIGH' region motif. An L-isoleucyl-5'-AMP-binding site is contributed by E554. The short motif at 595-599 (KMSKS) is the 'KMSKS' region element. K598 is a binding site for ATP. Zn(2+) is bound by residues C885, C888, C905, and C908.

This sequence belongs to the class-I aminoacyl-tRNA synthetase family. IleS type 1 subfamily. As to quaternary structure, monomer. It depends on Zn(2+) as a cofactor.

The protein resides in the cytoplasm. The enzyme catalyses tRNA(Ile) + L-isoleucine + ATP = L-isoleucyl-tRNA(Ile) + AMP + diphosphate. Functionally, catalyzes the attachment of isoleucine to tRNA(Ile). As IleRS can inadvertently accommodate and process structurally similar amino acids such as valine, to avoid such errors it has two additional distinct tRNA(Ile)-dependent editing activities. One activity is designated as 'pretransfer' editing and involves the hydrolysis of activated Val-AMP. The other activity is designated 'posttransfer' editing and involves deacylation of mischarged Val-tRNA(Ile). This is Isoleucine--tRNA ligase (ileS) from Staphylococcus epidermidis (strain ATCC 35984 / DSM 28319 / BCRC 17069 / CCUG 31568 / BM 3577 / RP62A).